The sequence spans 219 residues: Ras-related protein Rab-3B (219 aa).

At A2 the chain carries N-acetylalanine. Residues S31, S32, V33, G34, K35, T36, S37, P49, and S53 each contribute to the GTP site. T36 provides a ligand contact to Mg(2+). Residues 45-58 (DTFTPAFVSTVGID) carry the Switch 1 motif. The Mg(2+) site is built by T54 and D77. The Switch 2 signature appears at 78-96 (TAGQERYRTITTAYYRGAM). G80 serves as a coordination point for GTP. T86 carries the post-translational modification Phosphothreonine. N135, K136, D138, A166, and K167 together coordinate GTP. S188 carries the post-translational modification Phosphoserine. 2 S-geranylgeranyl cysteine lipidation sites follow: C217 and C219. C219 bears the Cysteine methyl ester mark.

This sequence belongs to the small GTPase superfamily. Rab family. Interacts with RIMS1, RIMS2, RPH3A and RPH3AL. The GTP-bound form interacts with GAS8/DRC4 (via coiled-coil domains). Interacts with GDI2, CHM and CHML; phosphorylation at Thr-86 disrupts these interactions. Interacts with MADD (via uDENN domain); the GTP-bound form is preferred for interaction. Mg(2+) serves as cofactor. In terms of processing, phosphorylation of Thr-86 in the switch II region by LRRK2 prevents the association of RAB regulatory proteins, including CHM, CHML and RAB GDP dissociation inhibitor GDI2.

Its subcellular location is the cell membrane. It localises to the golgi apparatus. It catalyses the reaction GTP + H2O = GDP + phosphate + H(+). With respect to regulation, regulated by guanine nucleotide exchange factors (GEFs) which promote the exchange of bound GDP for free GTP. Regulated by GTPase activating proteins (GAPs) which increase the GTP hydrolysis activity. Inhibited by GDP dissociation inhibitors (GDIs) which prevent Rab-GDP dissociation. The small GTPases Rab are key regulators of intracellular membrane trafficking, from the formation of transport vesicles to their fusion with membranes. Rabs cycle between an inactive GDP-bound form and an active GTP-bound form that is able to recruit to membranes different sets of downstream effectors directly responsible for vesicle formation, movement, tethering and fusion. The sequence is that of Ras-related protein Rab-3B (RAB3B) from Bos taurus (Bovine).